Reading from the N-terminus, the 485-residue chain is Acyltransferase cm3D (485 aa).

H169 functions as the Proton acceptor in the catalytic mechanism.

This sequence belongs to the plant acyltransferase family. As to quaternary structure, monomer.

It participates in secondary metabolite biosynthesis. In terms of biological role, acyltransferase; part of the gene cluster that mediates the biosynthesis of beauveriolides I and III, cyclodepsipeptides acting as inhibitors of the acyl-CoA:cholesterol acyltransferase. The HR-PKS cm3B initiates the biosynthesis of beauveriolides by iteratively catalyzing the formation of the linear polyketide chain. The ATP-dependent acetyl-CoA ligase cm3D converts the polyketide carboxylic acid to a CoA thioester which id shuttled to the first T domain in the NRPS cm3A by the acetyltransferase cm3C. Cm3A contains 13 domains and assembles the polyketide chain, L-phenylalanine, L-alanine, and D-leucine (or D-allo-isoleucine) to form beauveriolide I (or beauveriolide III). The production of both beauveriolides I and III suggests the substrate adaptability of cm3B, using different amino acids as substrates. The polypeptide is Acyltransferase cm3D (Cordyceps militaris (strain CM01) (Caterpillar fungus)).